Consider the following 193-residue polypeptide: Hypoxanthine/guanine phosphoribosyltransferase (193 aa).

Belongs to the purine/pyrimidine phosphoribosyltransferase family. Archaeal HPRT subfamily. As to quaternary structure, homodimer.

It is found in the cytoplasm. It carries out the reaction IMP + diphosphate = hypoxanthine + 5-phospho-alpha-D-ribose 1-diphosphate. The catalysed reaction is GMP + diphosphate = guanine + 5-phospho-alpha-D-ribose 1-diphosphate. The protein operates within purine metabolism; IMP biosynthesis via salvage pathway; IMP from hypoxanthine: step 1/1. Functionally, catalyzes a salvage reaction resulting in the formation of IMP that is energically less costly than de novo synthesis. Prefers hypoxanthine, has 66% activity with guanine while activity with adenine, xanthine, uracil, orotate, or cytosine is negligible. In Methanothermobacter marburgensis (strain ATCC BAA-927 / DSM 2133 / JCM 14651 / NBRC 100331 / OCM 82 / Marburg) (Methanobacterium thermoautotrophicum), this protein is Hypoxanthine/guanine phosphoribosyltransferase.